The sequence spans 45 residues: Photosystem I reaction center subunit IX 1 (45 aa).

A helical transmembrane segment spans residues 9–29 (WFRSAPVVATIWITLTAGIIV).

Belongs to the PsaJ family.

It localises to the cellular thylakoid membrane. Its function is as follows. May help in the organization of the PsaE and PsaF subunits. This chain is Photosystem I reaction center subunit IX 1, found in Prochlorococcus marinus (strain NATL1A).